We begin with the raw amino-acid sequence, 489 residues long: Betaine aldehyde dehydrogenase (489 aa).

K(+) contacts are provided by T26 and D93. 150–152 lines the NAD(+) pocket; the sequence is GAW. K162 serves as the catalytic Charge relay system. 176-179 is an NAD(+) binding site; that stretch reads KPSE. V180 is a binding site for K(+). Residue 229 to 232 coordinates NAD(+); the sequence is GVET. A K(+)-binding site is contributed by L245. E251 serves as the catalytic Proton acceptor. NAD(+) contacts are provided by G253, C285, and E386. Catalysis depends on C285, which acts as the Nucleophile. C285 is subject to Cysteine sulfenic acid (-SOH). K(+) is bound by residues K456 and G459. The Charge relay system role is filled by E463.

Belongs to the aldehyde dehydrogenase family. Dimer of dimers. It depends on K(+) as a cofactor.

The enzyme catalyses betaine aldehyde + NAD(+) + H2O = glycine betaine + NADH + 2 H(+). It functions in the pathway amine and polyamine biosynthesis; betaine biosynthesis via choline pathway; betaine from betaine aldehyde: step 1/1. Its function is as follows. Involved in the biosynthesis of the osmoprotectant glycine betaine. Catalyzes the irreversible oxidation of betaine aldehyde to the corresponding acid. This Burkholderia orbicola (strain MC0-3) protein is Betaine aldehyde dehydrogenase.